The following is a 178-amino-acid chain: Cytidylate kinase (178 aa).

7 to 15 (GLPGTGTTT) contributes to the ATP binding site.

The protein belongs to the cytidylate kinase family. Type 2 subfamily.

It is found in the cytoplasm. It catalyses the reaction CMP + ATP = CDP + ADP. It carries out the reaction dCMP + ATP = dCDP + ADP. The polypeptide is Cytidylate kinase (cmk) (Methanocaldococcus jannaschii (strain ATCC 43067 / DSM 2661 / JAL-1 / JCM 10045 / NBRC 100440) (Methanococcus jannaschii)).